The chain runs to 313 residues: Probable F-box protein At3g44130 (313 aa).

The 46-residue stretch at 1–46 (MASGNLPWELEEEILCRLPLGSLVRLRSVCKHWNDFFNDKWFIKKS) folds into the F-box domain.

This chain is Probable F-box protein At3g44130, found in Arabidopsis thaliana (Mouse-ear cress).